We begin with the raw amino-acid sequence, 192 residues long: UPF0312 protein PputW619_0484 (192 aa).

An N-terminal signal peptide occupies residues 1–23 (MLKKTFAALALGTALLSAGQAMA).

This sequence belongs to the UPF0312 family. Type 1 subfamily.

Its subcellular location is the periplasm. In Pseudomonas putida (strain W619), this protein is UPF0312 protein PputW619_0484.